The primary structure comprises 278 residues: Elongation factor Ts (278 aa).

The interval 80–83 (TDFV) is involved in Mg(2+) ion dislocation from EF-Tu.

It belongs to the EF-Ts family.

It localises to the cytoplasm. In terms of biological role, associates with the EF-Tu.GDP complex and induces the exchange of GDP to GTP. It remains bound to the aminoacyl-tRNA.EF-Tu.GTP complex up to the GTP hydrolysis stage on the ribosome. The protein is Elongation factor Ts of Micrococcus luteus (strain ATCC 4698 / DSM 20030 / JCM 1464 / CCM 169 / CCUG 5858 / IAM 1056 / NBRC 3333 / NCIMB 9278 / NCTC 2665 / VKM Ac-2230) (Micrococcus lysodeikticus).